The following is a 295-amino-acid chain: MGIQSSTMKLPLIHEILDYWHLLKPKIMYLVVLTGVTGIIIAPGNIHPLIAVISTLCIALGSGAAGAINMWYDSDIDALMTRTKTRPIPAGKISRSSALEVGLVLSFISVTIMMIAVNYISGILLAISIGFYIYVYTMYLKRRTPQNIVIGGAAGALPPIIGWTSVTGSISIESLVLFLIIFMWTPPHFWALSLLNYHEYEKAKIPMLPVTHGIFTTKIHILVYSILLFPITLLPGLFLKDPVLYEITAIPLGLMFVVQAFQVFKSSISYHYRVMFTYSIIYLFILFTCIMLSSF.

Helical transmembrane passes span 30 to 50 (LVVL…HPLI), 51 to 71 (AVIS…INMW), 93 to 115 (ISRS…IMMI), 119 to 136 (YISG…IYVY), 148 to 168 (IVIG…SVTG), 175 to 195 (LVLF…LSLL), 219 to 239 (IHIL…GLFL), 244 to 264 (LYEI…FQVF), and 275 to 295 (MFTY…LSSF).

It belongs to the UbiA prenyltransferase family. Protoheme IX farnesyltransferase subfamily.

Its subcellular location is the cell inner membrane. It catalyses the reaction heme b + (2E,6E)-farnesyl diphosphate + H2O = Fe(II)-heme o + diphosphate. It participates in porphyrin-containing compound metabolism; heme O biosynthesis; heme O from protoheme: step 1/1. Converts heme B (protoheme IX) to heme O by substitution of the vinyl group on carbon 2 of heme B porphyrin ring with a hydroxyethyl farnesyl side group. This chain is Protoheme IX farnesyltransferase, found in Ehrlichia ruminantium (strain Gardel).